A 489-amino-acid chain; its full sequence is NAC domain-containing protein 74 (489 aa).

Residues 9-159 form the NAC domain; sequence LPPGFGFHPK…AYVLCRITKR (151 aa). Residues 108 to 165 mediate DNA binding; sequence IGTKKTLVFHEGRPPTGRRTEWIMHEYYIDERECQACPDMKDAYVLCRITKRNDWIPG. The span at 413–427 shows a compositional bias: basic and acidic residues; that stretch reads KNQAHDVASTKRSDA. The disordered stretch occupies residues 413-435; that stretch reads KNQAHDVASTKRSDAGKPSTELS. Residues 456–476 form a helical membrane-spanning segment; the sequence is WNMILVAGFAIGVAVVALHIG.

As to expression, widely expressed.

It is found in the nucleus. It localises to the cell membrane. In terms of biological role, transcription activator involved in heat and endoplasmic reticulum (ER) stress responses. Regulates the expression of genes involved in ER protein folding and heat stress-responsive genes. Binds directly to the promoter of BZIP74 and regulates its expression in response to heat stress. This Oryza sativa subsp. japonica (Rice) protein is NAC domain-containing protein 74.